Here is a 206-residue protein sequence, read N- to C-terminus: MSKLKQGTFITFEGGEGIGKSTQCQMLYEYLKSQNIPVILTREVGGTNVAEKMREILVHTDLLPMSELLQAMAARYDHMVKKIIPALQAGNIVICDRFIDSTACYQGLELENGIELVYNLHKDLMPPLMPDLTFFIDVESSIAIERINSRNMSNKFDVRGLDFYNKIYDCFKGLSKKFPERIVTIKASDLNPEQVHELIKKHLNLI.

An ATP-binding site is contributed by 14-21 (GGEGIGKS).

It belongs to the thymidylate kinase family.

The enzyme catalyses dTMP + ATP = dTDP + ADP. In terms of biological role, phosphorylation of dTMP to form dTDP in both de novo and salvage pathways of dTTP synthesis. This Rickettsia bellii (strain OSU 85-389) protein is Thymidylate kinase.